The sequence spans 328 residues: Nucleotide-binding protein BL0705 (328 aa).

Positions 1 to 35 (MNQQTTNRDTGEAAATNAPANSATSTSTPDNQPTP) are disordered. Over residues 13-29 (AAATNAPANSATSTSTP) the composition is skewed to low complexity. 46-53 (GMSGAGRS) contacts ATP. 101-104 (DVRS) contacts GTP.

The protein belongs to the RapZ-like family.

Displays ATPase and GTPase activities. This is Nucleotide-binding protein BL0705 from Bifidobacterium longum (strain NCC 2705).